Consider the following 344-residue polypeptide: CRISPR-associated endonuclease Cas1 2 (344 aa).

Glu167, His235, and Glu250 together coordinate Mn(2+).

Belongs to the CRISPR-associated endonuclease Cas1 family. In terms of assembly, homodimer, forms a heterotetramer with a Cas2 homodimer. Requires Mg(2+) as cofactor. It depends on Mn(2+) as a cofactor.

CRISPR (clustered regularly interspaced short palindromic repeat), is an adaptive immune system that provides protection against mobile genetic elements (viruses, transposable elements and conjugative plasmids). CRISPR clusters contain spacers, sequences complementary to antecedent mobile elements, and target invading nucleic acids. CRISPR clusters are transcribed and processed into CRISPR RNA (crRNA). Acts as a dsDNA endonuclease. Involved in the integration of spacer DNA into the CRISPR cassette. This is CRISPR-associated endonuclease Cas1 2 from Rhodospirillum rubrum (strain ATCC 11170 / ATH 1.1.1 / DSM 467 / LMG 4362 / NCIMB 8255 / S1).